The primary structure comprises 226 residues: Probable transcriptional regulatory protein y4xI (226 aa).

The 114-residue stretch at 1 to 114 folds into the Response regulatory domain; sequence MRTLLVDTDL…ELIARMRALL (114 aa). Residues 122 to 220 constitute a DNA-binding region (ompR/PhoB-type); that stretch reads CPIIEFGNLH…VRGIGYTLEL (99 aa).

Its subcellular location is the cytoplasm. This is Probable transcriptional regulatory protein y4xI from Sinorhizobium fredii (strain NBRC 101917 / NGR234).